The following is a 352-amino-acid chain: Phosphatase Herzog (352 aa).

The interval 1-102 (MDATSIITQV…PLPDQQRYLL (102 aa)) is prion-like domain necessary for both protein assembly and membrane targeting. The segment at 103 to 267 (PQVRLTDMHR…ELIPLFEKLS (165 aa)) is mediates substrate recognition. The 159-residue stretch at 108–266 (TDMHRKCMVI…RELIPLFEKL (159 aa)) folds into the FCP1 homology domain. Disordered stretches follow at residues 284-310 (NNQTNQQQHPQELQQAPNQLHQQLQQQ) and 332-352 (TMLNQQQTSPPSPQSELLQKT).

In terms of assembly, monomer. Forms higher-order protein aggregates with amyloid-like features during gastrulation. Interacts with babo, dah, Irk1, pch2, Ras64B, sax and Src64B.

It localises to the cell membrane. It carries out the reaction O-phospho-L-seryl-[protein] + H2O = L-seryl-[protein] + phosphate. Its activity is regulated as follows. Phosphatase activity requires amyloid-like aggregation on the membrane. Functionally, prion-like membrane-associated phosphatase. Phosphatase activity depends on amyloid-like assembly at the membrane. Might have a role in establishment of segment polarity in embryos. The chain is Phosphatase Herzog from Drosophila melanogaster (Fruit fly).